The following is a 111-amino-acid chain: Nascent polypeptide-associated complex protein (111 aa).

The region spanning 3–72 (GMNPRQMKKL…EEVREVLEIS (70 aa)) is the NAC-A/B domain.

It belongs to the NAC-alpha family. Homodimer. Interacts with the ribosome. Binds ribosomal RNA.

In terms of biological role, contacts the emerging nascent chain on the ribosome. This chain is Nascent polypeptide-associated complex protein, found in Thermococcus kodakarensis (strain ATCC BAA-918 / JCM 12380 / KOD1) (Pyrococcus kodakaraensis (strain KOD1)).